The primary structure comprises 231 residues: Adenosine 5'-phosphosulfate reductase (231 aa).

[4Fe-4S] cluster is bound by residues C118, C119, C201, and C204. Residue C227 is the Nucleophile; cysteine thiosulfonate intermediate of the active site.

It belongs to the PAPS reductase family. CysH subfamily. It depends on [4Fe-4S] cluster as a cofactor.

The protein localises to the cytoplasm. The enzyme catalyses [thioredoxin]-disulfide + sulfite + AMP + 2 H(+) = adenosine 5'-phosphosulfate + [thioredoxin]-dithiol. The protein operates within sulfur metabolism; hydrogen sulfide biosynthesis; sulfite from sulfate. Catalyzes the formation of sulfite from adenosine 5'-phosphosulfate (APS) using thioredoxin as an electron donor. In Halalkalibacterium halodurans (strain ATCC BAA-125 / DSM 18197 / FERM 7344 / JCM 9153 / C-125) (Bacillus halodurans), this protein is Adenosine 5'-phosphosulfate reductase.